A 317-amino-acid chain; its full sequence is Enoyl-CoA delta isomerase 3, peroxisomal (317 aa).

The ACB domain occupies 1 to 46 (MPKPGVFNFVNKATWDARNALGSLPKETARKNYVDLVSSLSSSSEA). A disordered region spans residues 40–60 (LSSSSEAPSQGKRGADEKARE). Residue 120–124 (SGNDL) coordinates substrate. A Microbody targeting signal motif is present at residues 315–317 (AKL).

It belongs to the enoyl-CoA hydratase/isomerase family. In terms of tissue distribution, expressed at high levels in the kidney. Also detected at very low levels in the duodenum, jejunum, ileum, heart, liver, lung, and brown adipose tissue (at protein level). In the kidney, expression seems to be localized mainly to the proximal tubule.

The protein localises to the peroxisome. The catalysed reaction is a (3Z)-enoyl-CoA = a 4-saturated (2E)-enoyl-CoA. It catalyses the reaction a (3E)-enoyl-CoA = a 4-saturated (2E)-enoyl-CoA. It carries out the reaction (3E)-nonenoyl-CoA = (2E)-nonenoyl-CoA. Catalyzes the isomerization of trans-3-nonenoyl-CoA into trans-2-nonenoyl-CoA. May also have activity towards other enoyl-CoA species. The polypeptide is Enoyl-CoA delta isomerase 3, peroxisomal (Mus musculus (Mouse)).